We begin with the raw amino-acid sequence, 201 residues long: MQLGLDFNLVEDLVAGVDEVGRGPLCGPVVTAAVILDPSRPILGLNDSKKLSEARREALFEEIREKALAWCIARAEVEEIDRLNILHATMLAMQRAVEGLSVTPRLALIDGNRCPKLAVPSAPVVKGDSQVPAIAAASILAKVSRDREMVELDRVYPGYGMAGHKGYPTAVHLEALSRLGPTPIHRRSFAPVRELLDVPVQ.

Residues 12–201 (DLVAGVDEVG…VRELLDVPVQ (190 aa)) form the RNase H type-2 domain. A divalent metal cation-binding residues include Asp18, Glu19, and Asp110.

The protein belongs to the RNase HII family. Mn(2+) serves as cofactor. It depends on Mg(2+) as a cofactor.

Its subcellular location is the cytoplasm. The catalysed reaction is Endonucleolytic cleavage to 5'-phosphomonoester.. Endonuclease that specifically degrades the RNA of RNA-DNA hybrids. The polypeptide is Ribonuclease HII (Pseudomonas aeruginosa (strain UCBPP-PA14)).